Here is a 393-residue protein sequence, read N- to C-terminus: Selenide, water dikinase (393 aa).

The segment at 1–21 is disordered; the sequence is MSEKEGKVIPETNGMKRPRFD. Residue Cys-42 is part of the active site. Residues Lys-45, 68–70, Asp-93, Asp-116, and 167–170 contribute to the ATP site; these read GMD and GGQT. A Mg(2+)-binding site is contributed by Asp-70. Asp-116 serves as a coordination point for Mg(2+). Asp-273 is a binding site for Mg(2+).

It belongs to the selenophosphate synthase 1 family. Class I subfamily. In terms of assembly, homodimer. The cofactor is Mg(2+).

The enzyme catalyses hydrogenselenide + ATP + H2O = selenophosphate + AMP + phosphate + 2 H(+). Its function is as follows. Synthesizes selenophosphate from selenide and ATP. This chain is Selenide, water dikinase, found in Trypanosoma brucei brucei (strain 927/4 GUTat10.1).